Reading from the N-terminus, the 323-residue chain is tRNA U34 carboxymethyltransferase (323 aa).

Carboxy-S-adenosyl-L-methionine-binding positions include lysine 91, tryptophan 105, lysine 110, glycine 130, 152–154 (DPT), 181–182 (IE), methionine 196, tyrosine 200, and arginine 315.

The protein belongs to the class I-like SAM-binding methyltransferase superfamily. CmoB family. As to quaternary structure, homotetramer.

It catalyses the reaction carboxy-S-adenosyl-L-methionine + 5-hydroxyuridine(34) in tRNA = 5-carboxymethoxyuridine(34) in tRNA + S-adenosyl-L-homocysteine + H(+). In terms of biological role, catalyzes carboxymethyl transfer from carboxy-S-adenosyl-L-methionine (Cx-SAM) to 5-hydroxyuridine (ho5U) to form 5-carboxymethoxyuridine (cmo5U) at position 34 in tRNAs. This Salmonella agona (strain SL483) protein is tRNA U34 carboxymethyltransferase.